Reading from the N-terminus, the 255-residue chain is Expansin-A25 (255 aa).

An N-terminal signal peptide occupies residues 1–26 (MEYAILFATSLVITVLAASGFAPAHG). The 116-residue stretch at 45-160 (GGACGYGNLY…QQVKCWRQGG (116 aa)) folds into the Expansin-like EG45 domain. An Expansin-like CBD domain is found at 170 to 249 (FFELVLVSNV…WWSFGMTFTS (80 aa)).

The protein belongs to the expansin family. Expansin A subfamily. In terms of tissue distribution, expressed in panicles and flowers.

It localises to the secreted. It is found in the cell wall. Its subcellular location is the membrane. In terms of biological role, may cause loosening and extension of plant cell walls by disrupting non-covalent bonding between cellulose microfibrils and matrix glucans. No enzymatic activity has been found. May be required for rapid internodal elongation in deepwater rice during submergence. This Oryza sativa subsp. japonica (Rice) protein is Expansin-A25 (EXPA25).